Consider the following 689-residue polypeptide: Long-chain-fatty-acid--CoA ligase 2 (689 aa).

252–263 (YTSGSTGKPKGV) lines the ATP pocket. The FACS motif lies at 518 to 567 (DGWFKTGDVGEIAKGNTLRLIDRKKNIVKSLNGEYIALEKIEAQFFTSPL).

The protein belongs to the ATP-dependent AMP-binding enzyme family. It depends on Mg(2+) as a cofactor.

It is found in the golgi apparatus. The protein resides in the vacuole membrane. It carries out the reaction a long-chain fatty acid + ATP + CoA = a long-chain fatty acyl-CoA + AMP + diphosphate. In terms of biological role, esterification, concomitant with transport, of endogenous long-chain fatty acids into metabolically active CoA thioesters for subsequent degradation or incorporation into phospholipids. Plays an important role in the determination of viability in the stationary phase. In Schizosaccharomyces pombe (strain 972 / ATCC 24843) (Fission yeast), this protein is Long-chain-fatty-acid--CoA ligase 2 (lcf2).